The sequence spans 468 residues: 3-isopropylmalate dehydratase large subunit (468 aa).

Residues cysteine 347, cysteine 407, and cysteine 410 each contribute to the [4Fe-4S] cluster site.

Belongs to the aconitase/IPM isomerase family. LeuC type 1 subfamily. As to quaternary structure, heterodimer of LeuC and LeuD. [4Fe-4S] cluster serves as cofactor.

It carries out the reaction (2R,3S)-3-isopropylmalate = (2S)-2-isopropylmalate. It functions in the pathway amino-acid biosynthesis; L-leucine biosynthesis; L-leucine from 3-methyl-2-oxobutanoate: step 2/4. Its function is as follows. Catalyzes the isomerization between 2-isopropylmalate and 3-isopropylmalate, via the formation of 2-isopropylmaleate. This chain is 3-isopropylmalate dehydratase large subunit, found in Campylobacter jejuni subsp. jejuni serotype O:6 (strain 81116 / NCTC 11828).